A 465-amino-acid chain; its full sequence is Mothers against decapentaplegic homolog 1 (465 aa).

The residue at position 1 (Met-1) is an N-acetylmethionine. The region spanning 12 to 136 is the MH1 domain; it reads PAVKRLLGWK…YKRVESPVLP (125 aa). Zn(2+)-binding residues include Cys-64, Cys-109, Cys-121, and His-126. The interval 162–248 is disordered; it reads NEPHMPLNAT…SQPMDTNMMA (87 aa). Positions 179-210 are enriched in low complexity; sequence PNSHPFPHSPNSSYPNSPGSSSSTYPHSPTSS. The span at 221 to 232 shows a compositional bias: pro residues; that stretch reads DTPPPAYLPPED. Positions 271-465 constitute an MH2 domain; the sequence is WCSIVYYELN…SPHNPISSVS (195 aa). Thr-322 bears the Phosphothreonine; by MINK1, TNIK and MAP4K4 mark. The L3 loop stretch occupies residues 418-428; that stretch reads KGWGAEYHRQD. 2 positions are modified to phosphoserine: Ser-463 and Ser-465.

It belongs to the dwarfin/SMAD family. Found in a complex with SMAD4 and YY1. Interacts with HGS, NANOG and ZCCHC12. Upon C-terminus phosphorylation: forms trimers with another SMAD1 and the co-SMAD SMAD4. Interacts with PEBP2-alpha subunit, CREB-binding protein (CBP), p300, SMURF1, SMURF2, USP15 and HOXC8. Associates with ZNF423 or ZNF521 in response to BMP2 leading to activate transcription of BMP target genes. Interacts with SKOR1. Interacts (via MH2 domain) with LEMD3. Binding to LEMD3 results in at least a partial reduction of receptor-mediated phosphorylation. Forms a ternary complex with PSMB4 and OAZ1 before PSMB4 is incorporated into the 20S proteasome. Interacts (via MH2 domain) with FAM83G (via MH2 domain); in a SMAD4-independent manner. Interacts with ZC3H3. Interacts with TMEM119. Interacts (via MH1 and MH2 domains) with ZNF8. Interacts with RANBP3L; the interaction increases when SMAD1 is not phosphorylated and mediates SMAD1 nuclear export. Interacts with EGR1; this interaction inhibits SMAD1 dephosphorylation. Interacts with SMAD6. Interacts with YAP1. Interacts with MTMR4; negatively regulates BMP signaling through SMAD1 dephosphorylation and retention in endosomes. Phosphorylation of the C-terminal SVS motif by BMP type 1 receptor kinase activates SMAD1 by promoting dissociation from the receptor and trimerization with SMAD4. Phosphorylation by ERK2 MAP kinase in response to EGF or HGF prevents SMAD1 nuclear accumulation and transcriptional activity in response to BMP. Dephosphorylation, probably by PPM1A, induces its export from the nucleus to the cytoplasm. Dephosphorylation is inhibited by association with EGR1. Phosphorylation by CDK8/9 creates binding sites for YAP1, and subsequent phosphorylation by GSK3 switches off YAP1 binding and adds binding sites for SMURF1. In terms of processing, ubiquitinated by SMAD-specific E3 ubiquitin ligase SMURF1, leading to its degradation. Monoubiquitinated, leading to prevent DNA-binding. Deubiquitination by USP15 alleviates inhibition and promotes activation of TGF-beta target genes. Dephosphorylation, probably by PPM1A, induces its export from the nucleus to the cytoplasm. Phospho-SMAD1 is ubiquitinated by CHIP leading to disruption of the SMAD1-SMAD4 complex. As to expression, ubiquitous. Highest expression seen in the heart and skeletal muscle.

It is found in the cytoplasm. It localises to the nucleus. In terms of biological role, transcriptional modulator that plays a role in various cellular processes, including embryonic development, cell differentiation, and tissue homeostasis. Upon BMP ligand binding to their receptors at the cell surface, is phosphorylated by activated type I BMP receptors (BMPRIs) and associates with SMAD4 to form a heteromeric complex which translocates into the nucleus acting as transcription factor. In turn, the hetero-trimeric complex recognizes cis-regulatory elements containing Smad Binding Elements (SBEs) to modulate the outcome of the signaling network. SMAD1/OAZ1/PSMB4 complex mediates the degradation of the CREBBP/EP300 repressor SNIP1. Positively regulates BMP4-induced expression of odontogenic development regulator MSX1 following IPO7-mediated nuclear import. In Homo sapiens (Human), this protein is Mothers against decapentaplegic homolog 1 (SMAD1).